A 366-amino-acid polypeptide reads, in one-letter code: Glucan organizing enzyme 1 (366 aa).

Topologically, residues 1-24 are extracellular; it reads MLPLWARGGKPIVIPLPQKRHITL. A helical membrane pass occupies residues 25 to 45; sequence PALPILLLLLGTGFLLHSLFF. Residues 46–366 are Cytoplasmic-facing; it reads PPPPPHPPGK…ETYKKWKRGH (321 aa).

Belongs to the glycosyltransferase 32 family.

The protein localises to the cell membrane. Its function is as follows. Plays a role in the localization of glycogen rosettes to the plasma membrane. Required for correct cell wall organization and may facilitate the connection between beta-1,3-glucan and beta-1,6-glucan in the cell wall. This Cryptococcus neoformans var. grubii serotype A (strain H99 / ATCC 208821 / CBS 10515 / FGSC 9487) (Filobasidiella neoformans var. grubii) protein is Glucan organizing enzyme 1.